Reading from the N-terminus, the 242-residue chain is MRLIVTKNYEEMSKVAAKEMAEDIKRNPEIVLGLATGGTPVGMYKELIRMYNEGELDFSKVTSINLDEYVGLSGDHDQSYRYFMNTNLFDHINIDKNNTFVPNGLAENVEEECMAYDARIQDIGGIDLQLLGLGANGHIGFNEPGEALSVGTNLTDLKESTIEANARFFDSIDDVPRKAITMGLGGIMKAKKIMVIASGEGKAEVVKAMMSGKITTEIPATMLQMHRDVILIVDEDAAKLLK.

The Proton acceptor; for enolization step role is filled by aspartate 67. Asparagine 136 functions as the For ring-opening step in the catalytic mechanism. The Proton acceptor; for ring-opening step role is filled by histidine 138. Glutamate 143 acts as the For ring-opening step in catalysis.

This sequence belongs to the glucosamine/galactosamine-6-phosphate isomerase family. NagB subfamily.

It catalyses the reaction alpha-D-glucosamine 6-phosphate + H2O = beta-D-fructose 6-phosphate + NH4(+). It functions in the pathway amino-sugar metabolism; N-acetylneuraminate degradation; D-fructose 6-phosphate from N-acetylneuraminate: step 5/5. Its function is as follows. Catalyzes the reversible isomerization-deamination of glucosamine 6-phosphate (GlcN6P) to form fructose 6-phosphate (Fru6P) and ammonium ion. The sequence is that of Glucosamine-6-phosphate deaminase from Clostridium perfringens (strain SM101 / Type A).